Consider the following 638-residue polypeptide: MFGSSRYLGSSEQPRANSLGPSDRTLVLCSLVEGEDKVNPSEPHGLRMEEKWLLKGKLRNQRNQNKLLSPNKKQRKNHTSKLQELALLLPIALKTGTKKLTKKEILVHVLQYIQYLQRNIDAAKALFKCHITTGEGGLAGLGQKPAWGPARRRRHSTPSSSPSSQKSCLQGACQKPRKKKLTQASESQTRTPKPRRSLALNKPEKLVAPSPDQKGSGTGGTTTPPRCPDSCGHPRPASSSPPGDRKGGQSQLTLLDLAEDTIHCDISSCWCQGSVQDDAPFPALLAQEDVARIHFLNKTQPHPRQKLVFYDSSEDVDKGSLDADPWLPAWTPENSPQGSPLFLGPPQIDVWSGTGHPSEILGLSPSLFSSPGKLLPDEILEDDMEYLTQAAFFEEVCLDLESSPSAYTQEAPQEKDTASKAPKDPPESHSLHRSSVSLDHCYLSLSGNSKAPSSSSSSSSSSSSSEDSDSEPLWKQREDMQANPVGTPGSSEEDEDTTWTPTRLASPLLAAEKKATKGQVARAPVKPKEKKKGPCPPQMKKKCVNGFIMFCRMNRKQYIRSCPGTASTAATKELAQLWRVMTQQERRPYCTKARRFSRQHNRIVKQDGSSSEAEDWETPKPFYQLLAEKALPLPPHLQ.

Disordered stretches follow at residues 1–21 (MFGSSRYLGSSEQPRANSLGP), 60–79 (NQRNQNKLLSPNKKQRKNHT), 138–249 (LAGL…KGGQ), 404–433 (PSAYTQEAPQEKDTASKAPKDPPESHSLHR), and 447–537 (GNSK…PCPP). Polar residues predominate over residues 7–20 (YLGSSEQPRANSLG). The basic motif; degenerate stretch occupies residues 62–75 (RNQNKLLSPNKKQR). The 55-residue stretch at 62 to 116 (RNQNKLLSPNKKQRKNHTSKLQELALLLPIALKTGTKKLTKKEILVHVLQYIQYL) folds into the bHLH domain. The tract at residues 76–116 (KNHTSKLQELALLLPIALKTGTKKLTKKEILVHVLQYIQYL) is helix-loop-helix motif. Low complexity predominate over residues 157-167 (TPSSSPSSQKS). Polar residues predominate over residues 182 to 191 (TQASESQTRT). Positions 412–430 (PQEKDTASKAPKDPPESHS) are enriched in basic and acidic residues. Over residues 453–465 (SSSSSSSSSSSSS) the composition is skewed to low complexity. Over residues 528–537 (KEKKKGPCPP) the composition is skewed to basic residues. Positions 540-608 (KKKCVNGFIM…QHNRIVKQDG (69 aa)) form a DNA-binding region, HMG box.

As to quaternary structure, interacts with STRA8.

The protein resides in the nucleus. Gatekeeper of meiotic initiation in both male and female germ cells. In complex with STRA8, directly activates the transcription of a subset of critical meiotic genes playing a central role in cell-cycle switching from mitosis to meiosis. Temporal expression of MEIOSIN is required for meiotic entry decision. This Homo sapiens (Human) protein is Meiosis initiator protein.